A 645-amino-acid chain; its full sequence is Rab11 family-interacting protein 5 (645 aa).

Residues 1–146 (MALVRDPEPA…AGRAQHTQWY (146 aa)) enclose the C2 domain. S176, S283, S286, S307, S357, and S367 each carry phosphoserine. Residues 271-299 (GAELLTRSPSHSSWLSTEGGRDSIQSPKL) are disordered. A compositionally biased stretch (polar residues) spans 277–286 (RSPSHSSWLS). The interval 341-550 (SHVYNEEPQP…STALSSGLER (210 aa)) is disordered. Residues 357-374 (SISGPFPPSSSLHSVPPR) are compositionally biased toward low complexity. The segment covering 375-387 (SSEEGSRSSDDSW) has biased composition (basic and acidic residues). Phosphoserine occurs at positions 391 and 395. Positions 452–463 (RMGLFHHHHHQG) are enriched in basic residues. S486, S530, S539, S545, and S640 each carry phosphoserine. One can recognise an FIP-RBD domain in the interval 578 to 640 (KDSAVLDQSA…ETSPTLLQIS (63 aa)).

Interacts with RAB11FIP4. Interacts with NAPG. Interacts with RO60. Interacts with RAB11A that has been activated by GTP binding. Phosphorylated on serine and threonine residues. Phosphorylation at Ser-357 is PKA-dependent.

Its subcellular location is the cytoplasm. It localises to the recycling endosome membrane. It is found in the early endosome membrane. The protein resides in the golgi apparatus membrane. The protein localises to the cytoplasmic vesicle. Its subcellular location is the secretory vesicle membrane. It localises to the mitochondrion membrane. Rab effector involved in protein trafficking from apical recycling endosomes to the apical plasma membrane. Involved in insulin granule exocytosis. May regulate V-ATPase intracellular transport in response to extracellular acidosis. The chain is Rab11 family-interacting protein 5 from Mus musculus (Mouse).